A 566-amino-acid polypeptide reads, in one-letter code: Protein downstream neighbor of Son (566 aa).

The interval 1–110 (MALSVPGYSP…QPEAPVPFLD (110 aa)) is disordered. Residues serine 28 and serine 34 each carry the phosphoserine modification. The segment covering 62-72 (GGRGGGSGGGP) has biased composition (gly residues). Residues 73–82 (AAARRNPFAR) are compositionally biased toward low complexity.

This sequence belongs to the DONSON family. In terms of assembly, component of the replisome complex composed of at least DONSON, MCM2, MCM7, PCNA and TICRR; interaction at least with PCNA occurs during DNA replication. In terms of tissue distribution, expressed in the brain, with higher levels in prenatal compared to adult brain.

It localises to the nucleus. Functionally, replisome component that maintains genome stability by protecting stalled or damaged replication forks. After the induction of replication stress, required for the stabilization of stalled replication forks, the efficient activation of the intra-S-phase and G/2M cell-cycle checkpoints and the maintenance of genome stability. The protein is Protein downstream neighbor of Son (DONSON) of Homo sapiens (Human).